Here is a 101-residue protein sequence, read N- to C-terminus: Small ribosomal subunit protein uS14 (101 aa).

It belongs to the universal ribosomal protein uS14 family. In terms of assembly, part of the 30S ribosomal subunit. Contacts proteins S3 and S10.

Functionally, binds 16S rRNA, required for the assembly of 30S particles and may also be responsible for determining the conformation of the 16S rRNA at the A site. The protein is Small ribosomal subunit protein uS14 of Hydrogenovibrio crunogenus (strain DSM 25203 / XCL-2) (Thiomicrospira crunogena).